A 259-amino-acid polypeptide reads, in one-letter code: Phosphatidylglycerol--prolipoprotein diacylglyceryl transferase (259 aa).

The next 4 helical transmembrane spans lie at 9–29, 55–75, 92–112, and 117–137; these read IIFS…VVGI, FITY…VLLY, EGGM…YLFC, and INFL…LFLG. Arg138 contacts a 1,2-diacyl-sn-glycero-3-phospho-(1'-sn-glycerol). The next 3 membrane-spanning stretches (helical) occupy residues 172–192, 201–221, and 228–248; these read QLYE…YAVF, GLNS…IEMF, and IGFI…MLLL.

The protein belongs to the Lgt family.

It localises to the cell inner membrane. The enzyme catalyses L-cysteinyl-[prolipoprotein] + a 1,2-diacyl-sn-glycero-3-phospho-(1'-sn-glycerol) = an S-1,2-diacyl-sn-glyceryl-L-cysteinyl-[prolipoprotein] + sn-glycerol 1-phosphate + H(+). It functions in the pathway protein modification; lipoprotein biosynthesis (diacylglyceryl transfer). Its function is as follows. Catalyzes the transfer of the diacylglyceryl group from phosphatidylglycerol to the sulfhydryl group of the N-terminal cysteine of a prolipoprotein, the first step in the formation of mature lipoproteins. The chain is Phosphatidylglycerol--prolipoprotein diacylglyceryl transferase from Rickettsia typhi (strain ATCC VR-144 / Wilmington).